A 329-amino-acid chain; its full sequence is 4-hydroxythreonine-4-phosphate dehydrogenase (329 aa).

Residues His136 and Thr137 each contribute to the substrate site. A divalent metal cation contacts are provided by His166, His211, and His266. Residues Lys274, Asn283, and Arg292 each contribute to the substrate site.

This sequence belongs to the PdxA family. In terms of assembly, homodimer. Requires Zn(2+) as cofactor. Mg(2+) is required as a cofactor. The cofactor is Co(2+).

It localises to the cytoplasm. It carries out the reaction 4-(phosphooxy)-L-threonine + NAD(+) = 3-amino-2-oxopropyl phosphate + CO2 + NADH. The protein operates within cofactor biosynthesis; pyridoxine 5'-phosphate biosynthesis; pyridoxine 5'-phosphate from D-erythrose 4-phosphate: step 4/5. In terms of biological role, catalyzes the NAD(P)-dependent oxidation of 4-(phosphooxy)-L-threonine (HTP) into 2-amino-3-oxo-4-(phosphooxy)butyric acid which spontaneously decarboxylates to form 3-amino-2-oxopropyl phosphate (AHAP). In Escherichia coli (strain K12 / MC4100 / BW2952), this protein is 4-hydroxythreonine-4-phosphate dehydrogenase.